The chain runs to 392 residues: MSVRESFNPESYELDKSFRLTRFAELKGTGCKVPQDVLQKLLESLQENHFQEDEQFLGAVMPRLGIGMDTCVIPLRHGGLSLVQTTDYIYPIVDDPYMMGRIACANVLSDLYAMGVTECDNMLMLLGVSNKLTDRERDKVMPLIIQGFKDAAEEAGTSVTGGQTVLNPWVVLGGVATTVCQPNEFIMPDNAVPGDVLVLTKPLGTQVAVAVHQWLDIPEKWNKIKLVVTQEDVELAYQEAMMNMARLNRTAAGLMHTFNAHAATDITGFGILGHAQNLAKQQRNEVSFVIHNLPVLAKMAAVSKACGNMFGLMHGSCPETSGGLLICLPREQAARFCAEIKSPKYGEGHQAWIIGIVEKGNRTARIIDKPRIIEVAPQVASQNVNPTPGATS.

Cys-31 is an active-site residue. Residues Lys-32, 67 to 69 (GMD), Asp-87, Asp-110, and 161 to 164 (GGQT) each bind ATP. Residue Asp-69 coordinates Mg(2+). Asp-110 is a binding site for Mg(2+). Asp-265 is a binding site for Mg(2+).

It belongs to the selenophosphate synthase 1 family. Class II subfamily. As to quaternary structure, homodimer. The cofactor is Mg(2+).

It localises to the cell membrane. The protein localises to the nucleus membrane. The enzyme catalyses hydrogenselenide + ATP + H2O = selenophosphate + AMP + phosphate + 2 H(+). In terms of biological role, synthesizes selenophosphate from selenide and ATP. The sequence is that of Selenide, water dikinase 1 (sephs1) from Xenopus tropicalis (Western clawed frog).